A 392-amino-acid polypeptide reads, in one-letter code: Arogenate dehydratase/prephenate dehydratase 1, chloroplastic (392 aa).

Residues 1–48 constitute a chloroplast transit peptide; the sequence is MALRCFPIWVCPQTTHHRSPLMGLAEFDADKRRRFCLWECSSSASQRA. Positions 107–282 constitute a Prephenate dehydratase domain; it reads RISFQGIPGA…NVTRFLILAR (176 aa). Residues 296–387 enclose the ACT domain; that stretch reads SIVFSLEEGP…SFIRILGCYP (92 aa).

Expressed in roots, leaves, stems, flowers and siliques.

The protein localises to the plastid. It is found in the chloroplast stroma. The enzyme catalyses L-arogenate + H(+) = L-phenylalanine + CO2 + H2O. The catalysed reaction is prephenate + H(+) = 3-phenylpyruvate + CO2 + H2O. It participates in amino-acid biosynthesis; L-phenylalanine biosynthesis; L-phenylalanine from L-arogenate: step 1/1. Its pathway is amino-acid biosynthesis; L-phenylalanine biosynthesis; phenylpyruvate from prephenate: step 1/1. Functionally, converts the prephenate produced from the shikimate-chorismate pathway into phenylalanine. Dehydratase that uses arogenate and prephenate as substrates. Utilzes more efficiently arogenate than prephenate. The protein is Arogenate dehydratase/prephenate dehydratase 1, chloroplastic of Arabidopsis thaliana (Mouse-ear cress).